Reading from the N-terminus, the 79-residue chain is Acyl carrier protein (79 aa).

Residues 1–76 (MEVFEEVRDV…DVVTYIENLN (76 aa)) form the Carrier domain. Serine 36 is subject to O-(pantetheine 4'-phosphoryl)serine.

This sequence belongs to the acyl carrier protein (ACP) family. Post-translationally, 4'-phosphopantetheine is transferred from CoA to a specific serine of apo-ACP by AcpS. This modification is essential for activity because fatty acids are bound in thioester linkage to the sulfhydryl of the prosthetic group.

The protein localises to the cytoplasm. It functions in the pathway lipid metabolism; fatty acid biosynthesis. Functionally, carrier of the growing fatty acid chain in fatty acid biosynthesis. In Campylobacter hominis (strain ATCC BAA-381 / DSM 21671 / CCUG 45161 / LMG 19568 / NCTC 13146 / CH001A), this protein is Acyl carrier protein.